A 667-amino-acid polypeptide reads, in one-letter code: MSQRVSDQVMADVIAETRSNSSSHRHGGGGGGDDTTSLPYMHKVGTPPKQTLFQEIKHSFNETFFPDKPFGKFKDQSGFRKLELGLQYIFPILEWGRHYDLKKFRGDFIAGLTIASLCIPQDLAYAKLANLDPWYGLYSSFVAPLVYAFMGTSRDIAIGPVAVVSLLLGTLLSNEISNTKSHDYLRLAFTATFFAGVTQMLLGVCRLGFLIDFLSHAAIVGFMAGAAITIGLQQLKGLLGISNNNFTKKTDIISVMRSVWTHVHHGWNWETILIGLSFLIFLLITKYIAKKNKKLFWVSAISPMISVIVSTFFVYITRADKRGVSIVKHIKSGVNPSSANEIFFHGKYLGAGVRVGVVAGLVALTEAIAIGRTFAAMKDYALDGNKEMVAMGTMNIVGSLSSCYVTTGSFSRSAVNYMAGCKTAVSNIVMSIVVLLTLLVITPLFKYTPNAVLASIIIAAVVNLVNIEAMVLLWKIDKFDFVACMGAFFGVIFKSVEIGLLIAVAISFAKILLQVTRPRTAVLGKLPGTSVYRNIQQYPKAAQIPGMLIIRVDSAIYFSNSNYIKERILRWLIDEGAQRTESELPEIQHLITEMSPVPDIDTSGIHAFEELYKTLQKREVQLILANPGPVVIEKLHASKLTELIGEDKIFLTVADAVATYGPKTAAF.

The disordered stretch occupies residues 16–38 (ETRSNSSSHRHGGGGGGDDTTSL). 11 helical membrane passes run 106-126 (GDFI…LAYA), 131-151 (LDPW…AFMG), 156-176 (IAIG…SNEI), 185-205 (LRLA…LGVC), 208-228 (GFLI…GAAI), 269-289 (WETI…KYIA), 296-316 (FWVS…FVYI), 350-370 (GAGV…AIAI), 425-445 (VSNI…TPLF), 452-472 (VLAS…AMVL), and 486-506 (GAFF…AVAI). An STAS domain is found at 537 to 660 (QYPKAAQIPG…LTVADAVATY (124 aa)).

Belongs to the SLC26A/SulP transporter (TC 2.A.53) family.

The protein resides in the membrane. High-affinity H(+)/sulfate cotransporter that mediates the uptake of sulfate by plant roots from low concentrations of sulfate in the soil solution. The chain is High affinity sulfate transporter 1 (ST1) from Stylosanthes hamata (Caribbean stylo).